Reading from the N-terminus, the 360-residue chain is MKPSIVAKLEALQERHEEVEAMLGDAGVIADQERFRALSREYAQLTDVSQCFRQWQQSQEDIETAEMMLSDAEMRDMAQEELQTARAASEELEQQLQVLLLPKDPDDERNCYLEVRAGTGGDEAAIFAGDLFRMYSRYAESRRWKVEVMSANEGEHGGYKEVIAKVVGEGAYGRLKFESGGHRVQRVPETESQGRIHTSACTVAVMPELPEAELPDINPSDLKIDTFRSSGAGGQHVNTTDSAIRITHLPTGIVVECQDERSQHKNKAKALGVLGSRIRAAEMARRQQEESSTRRNLLGSGDRSDRNRTYNFPQGRVTDHRINLTIYRLDEAMEGKLDALIEPIVQEYQADQLAALSGQD.

Glutamine 235 is modified (N5-methylglutamine). The segment covering 284-293 (ARRQQEESST) has biased composition (basic and acidic residues). The segment at 284–314 (ARRQQEESSTRRNLLGSGDRSDRNRTYNFPQ) is disordered.

It belongs to the prokaryotic/mitochondrial release factor family. Methylated by PrmC. Methylation increases the termination efficiency of RF1.

It is found in the cytoplasm. Its function is as follows. Peptide chain release factor 1 directs the termination of translation in response to the peptide chain termination codons UAG and UAA. This is Peptide chain release factor 1 from Erwinia tasmaniensis (strain DSM 17950 / CFBP 7177 / CIP 109463 / NCPPB 4357 / Et1/99).